A 417-amino-acid polypeptide reads, in one-letter code: Serine hydroxymethyltransferase (417 aa).

Residues L121 and 125–127 (GHL) contribute to the (6S)-5,6,7,8-tetrahydrofolate site. K229 is subject to N6-(pyridoxal phosphate)lysine. Residue 355–357 (SPF) coordinates (6S)-5,6,7,8-tetrahydrofolate.

The protein belongs to the SHMT family. Homodimer. It depends on pyridoxal 5'-phosphate as a cofactor.

The protein localises to the cytoplasm. The enzyme catalyses (6R)-5,10-methylene-5,6,7,8-tetrahydrofolate + glycine + H2O = (6S)-5,6,7,8-tetrahydrofolate + L-serine. Its pathway is one-carbon metabolism; tetrahydrofolate interconversion. The protein operates within amino-acid biosynthesis; glycine biosynthesis; glycine from L-serine: step 1/1. Functionally, catalyzes the reversible interconversion of serine and glycine with tetrahydrofolate (THF) serving as the one-carbon carrier. This reaction serves as the major source of one-carbon groups required for the biosynthesis of purines, thymidylate, methionine, and other important biomolecules. Also exhibits THF-independent aldolase activity toward beta-hydroxyamino acids, producing glycine and aldehydes, via a retro-aldol mechanism. The chain is Serine hydroxymethyltransferase from Xylella fastidiosa (strain M12).